Reading from the N-terminus, the 284-residue chain is 2-dehydro-3-deoxyphosphooctonate aldolase (284 aa).

The protein belongs to the KdsA family.

Its subcellular location is the cytoplasm. The catalysed reaction is D-arabinose 5-phosphate + phosphoenolpyruvate + H2O = 3-deoxy-alpha-D-manno-2-octulosonate-8-phosphate + phosphate. It participates in carbohydrate biosynthesis; 3-deoxy-D-manno-octulosonate biosynthesis; 3-deoxy-D-manno-octulosonate from D-ribulose 5-phosphate: step 2/3. It functions in the pathway bacterial outer membrane biogenesis; lipopolysaccharide biosynthesis. The protein is 2-dehydro-3-deoxyphosphooctonate aldolase of Escherichia coli O6:K15:H31 (strain 536 / UPEC).